A 100-amino-acid chain; its full sequence is Large ribosomal subunit protein bL28 (100 aa).

It belongs to the bacterial ribosomal protein bL28 family.

This Gluconobacter oxydans (strain 621H) (Gluconobacter suboxydans) protein is Large ribosomal subunit protein bL28.